Consider the following 270-residue polypeptide: Phosphatidate cytidylyltransferase (270 aa).

A run of 7 helical transmembrane segments spans residues 19 to 39 (LWLT…IGLA), 53 to 73 (TAFS…LLIL), 76 to 96 (GALL…VTQW), 101 to 121 (GWPA…SLLR), 126 to 146 (FGFT…IAAY), 183 to 203 (LVAS…ALLL), and 248 to 268 (ALLY…AIFF).

The protein belongs to the CDS family.

It is found in the cell inner membrane. It carries out the reaction a 1,2-diacyl-sn-glycero-3-phosphate + CTP + H(+) = a CDP-1,2-diacyl-sn-glycerol + diphosphate. Its pathway is phospholipid metabolism; CDP-diacylglycerol biosynthesis; CDP-diacylglycerol from sn-glycerol 3-phosphate: step 3/3. The sequence is that of Phosphatidate cytidylyltransferase (cdsA) from Brucella suis biovar 1 (strain 1330).